A 227-amino-acid chain; its full sequence is UPF0688 protein C1orf174 homolog (227 aa).

Disordered stretches follow at residues 1 to 122 (MRKR…VSDL) and 207 to 227 (AKEE…EGNI). Residues 47–63 (TEKESSKKLRKDEKGPV) are compositionally biased toward basic and acidic residues. Composition is skewed to polar residues over residues 77-104 (AASN…NGTR) and 113-122 (RLPSSPVSDL).

This sequence belongs to the UPF0688 family.

The protein resides in the nucleus. This Xenopus tropicalis (Western clawed frog) protein is UPF0688 protein C1orf174 homolog.